We begin with the raw amino-acid sequence, 232 residues long: tRNA-uridine aminocarboxypropyltransferase (232 aa).

C31, C34, C41, and C43 together coordinate Zn(2+). A DXTW motif is present at residues 137–140 (DGTW).

This sequence belongs to the TDD superfamily. DTWD2 family. TapT subfamily. As to quaternary structure, monomer in solution.

It catalyses the reaction a uridine in tRNA + S-adenosyl-L-methionine = a 3-[(3S)-3-amino-3-carboxypropyl]uridine in tRNA + S-methyl-5'-thioadenosine + H(+). It carries out the reaction uridine(47) in tRNA(Phe) + S-adenosyl-L-methionine = 3-[(3S)-3-amino-3-carboxypropyl]uridine(47) in tRNA(Phe) + S-methyl-5'-thioadenosine + H(+). The degree of the acp3U modification at U47 is dependent on the presence of the m7G modification at the preceding nucleotide G46. It also depends on medium conditions. Its function is as follows. Catalyzes the formation of 3-(3-amino-3-carboxypropyl)uridine (acp3U) at position 47 of tRNAs. Acp3U47 confers thermal stability on tRNA. This Escherichia coli (strain K12) protein is tRNA-uridine aminocarboxypropyltransferase.